A 312-amino-acid polypeptide reads, in one-letter code: Ankyrin repeat family A protein 2 (312 aa).

ANK repeat units lie at residues 147–179 (ANSL…HTDE), 180–212 (EGFT…LLGK), 213–245 (GRES…EYDW), 246–278 (NGGT…IETD), and 279–312 (SGYN…NIRE).

As to quaternary structure, interacts (via ANK repeats) with CCDC8 (via PxLPxI/L motif); mediates the interaction with the 3M complex which is composed of CCDC8, CUL7 and OBSL1. Interacts (via ANK repeats) with HDAC4 (via PxLPxI/L motif). Interacts (via ANK repeats) with HDAC5 (via PxLPxI/L motif). Interacts (via ANK repeats) with LRP2/megalin (via PxLPxI/L motif). Interacts (via ANK repeats) with RFX7 (via PxLPxI/L motif). Interacts with AHRR. Interacts with NEK6.

It localises to the cytoplasm. Its subcellular location is the cytoskeleton. It is found in the membrane. Its function is as follows. May regulate the interaction between the 3M complex and the histone deacetylases HDAC4 and HDAC5. May also regulate LRP2/megalin. In Mus musculus (Mouse), this protein is Ankyrin repeat family A protein 2 (Ankra2).